We begin with the raw amino-acid sequence, 433 residues long: Monodehydroascorbate reductase (433 aa).

FAD is bound by residues 13-16, E40, R47, K52, I95, and 146-147; these read GGVS and RE. NAD(+) contacts are provided by residues 171-177, E195, R201, and G260; that span reads GGYIGLE. 173 to 177 is an NADP(+) binding site; sequence YIGLE. 2 residues coordinate NADP(+): R201 and G260. D297 serves as a coordination point for FAD. 313-314 contacts NAD(+); that stretch reads EH. 313–314 lines the NADP(+) pocket; sequence EH. V315 provides a ligand contact to FAD. Position 319 (R319) interacts with L-ascorbate. Y348 is a binding site for FAD. Y348 provides a ligand contact to NAD(+). Residue Y348 participates in NADP(+) binding. R350 is an L-ascorbate binding site.

This sequence belongs to the FAD-dependent oxidoreductase family. Requires FAD as cofactor. Expressed in leaves, and to a lesser degree in stems, roots and all stages of fruit.

The protein resides in the cytoplasm. The catalysed reaction is 2 monodehydro-L-ascorbate radical + NADH + H(+) = 2 L-ascorbate + NAD(+). Catalyzes the conversion of monodehydroascorbate to ascorbate, oxidizing NADH in the process. This is Monodehydroascorbate reductase from Solanum lycopersicum (Tomato).